Reading from the N-terminus, the 97-residue chain is Mitochondrial import inner membrane translocase subunit Tim8 A (97 aa).

Residues 43 to 66 carry the Twin CX3C motif motif; the sequence is CWEKCMDKPGPKLDSRAEACFVNC. 2 disulfide bridges follow: Cys43–Cys66 and Cys47–Cys62. Phosphoserine occurs at positions 57, 87, 94, and 96.

Belongs to the small Tim family. As to quaternary structure, heterohexamer; composed of 3 copies of TIMM8A and 3 copies of TIMM13, named soluble 70 kDa complex. Associates with the TIM22 complex, whose core is composed of TIMM22.

Its subcellular location is the mitochondrion inner membrane. Its function is as follows. Mitochondrial intermembrane chaperone that participates in the import and insertion of some multi-pass transmembrane proteins into the mitochondrial inner membrane. Also required for the transfer of beta-barrel precursors from the TOM complex to the sorting and assembly machinery (SAM complex) of the outer membrane. Acts as a chaperone-like protein that protects the hydrophobic precursors from aggregation and guide them through the mitochondrial intermembrane space. The TIMM8-TIMM13 complex mediates the import of proteins such as TIMM23, SLC25A12/ARALAR1 and SLC25A13/ARALAR2, while the predominant TIMM9-TIMM10 70 kDa complex mediates the import of much more proteins. The protein is Mitochondrial import inner membrane translocase subunit Tim8 A (TIMM8A) of Bos taurus (Bovine).